Here is a 571-residue protein sequence, read N- to C-terminus: Potassium-transporting ATPase potassium-binding subunit (571 aa).

The next 12 helical transmembrane spans lie at 5–25 (GWMQIALYGAVVLALVRPLGG), 64–84 (LAYAGAMVLFNVAGFVLLYAL), 136–156 (GLTHQNFVSAASGMAVAVALI), 179–199 (LYVLLPLCTVLALFYVSQGMP), 220–240 (VGPVASQVAIKMLGTNGGGFF), 254–274 (LSNFLQMLSIFVIGAALTNVF), 285–305 (WAILTAMGLLFLAGVTVTYWA), 330–350 (FGIAASALFAVITTAASCGAV), 375–395 (IIGGVGAGLYGMLVFVVVAIF), 421–441 (MLGILCLPLMMLGFTAFATVV), 488–508 (LAIGMLVGRFFVKIPVLAIAG), and 527–547 (GGLFVGLLVGVVLIIGGLTFF).

This sequence belongs to the KdpA family. In terms of assembly, the system is composed of three essential subunits: KdpA, KdpB and KdpC.

The protein localises to the cell inner membrane. In terms of biological role, part of the high-affinity ATP-driven potassium transport (or Kdp) system, which catalyzes the hydrolysis of ATP coupled with the electrogenic transport of potassium into the cytoplasm. This subunit binds the periplasmic potassium ions and delivers the ions to the membrane domain of KdpB through an intramembrane tunnel. The sequence is that of Potassium-transporting ATPase potassium-binding subunit from Methylorubrum extorquens (strain PA1) (Methylobacterium extorquens).